The sequence spans 271 residues: Mannosyl-3-phosphoglycerate phosphatase (271 aa).

Asp13 serves as the catalytic Nucleophile. The Mg(2+) site is built by Asp13, Asp15, and Asp214.

Belongs to the HAD-like hydrolase superfamily. MPGP family. The cofactor is Mg(2+).

It is found in the cytoplasm. The enzyme catalyses 2-O-(alpha-D-mannosyl)-3-phosphoglycerate + H2O = (2R)-2-O-(alpha-D-mannosyl)-glycerate + phosphate. This chain is Mannosyl-3-phosphoglycerate phosphatase (yedP), found in Escherichia coli O157:H7.